Reading from the N-terminus, the 155-residue chain is Small ribosomal subunit protein uS7cz/uS7cy (155 aa).

It belongs to the universal ribosomal protein uS7 family. Part of the 30S ribosomal subunit.

Its subcellular location is the plastid. The protein localises to the chloroplast. Its function is as follows. One of the primary rRNA binding proteins, it binds directly to 16S rRNA where it nucleates assembly of the head domain of the 30S subunit. This is Small ribosomal subunit protein uS7cz/uS7cy (rps7-A) from Drimys granadensis.